Reading from the N-terminus, the 686-residue chain is Potassium-transporting ATPase ATP-binding subunit 2 (686 aa).

The next 4 helical transmembrane spans lie at 37 to 57 (MFVVEIGAIISLALCFFPNLF), 64 to 84 (MILYNSLVFIILLLTLLFANF), 223 to 243 (LLVSLTIIFLIVIVSLYPMAI), and 255 to 275 (VALTVCLIPTTIGGLLSAIGI). Residue aspartate 306 is the 4-aspartylphosphate intermediate of the active site. ATP is bound by residues aspartate 343, glutamate 347, 376–383 (FTAQTRMS), and lysine 395. The Mg(2+) site is built by aspartate 518 and aspartate 522. 3 helical membrane passes run 588–608 (FAIIPAMFLAIIPQMQVLNIM), 616–636 (AILSALIFNAIIIPCLIPLAM), and 656–676 (VYGVGGMIVPFIGIKLIDLVI).

Belongs to the cation transport ATPase (P-type) (TC 3.A.3) family. Type IA subfamily. As to quaternary structure, the system is composed of three essential subunits: KdpA, KdpB and KdpC.

The protein localises to the cell membrane. It catalyses the reaction K(+)(out) + ATP + H2O = K(+)(in) + ADP + phosphate + H(+). Its function is as follows. Part of the high-affinity ATP-driven potassium transport (or Kdp) system, which catalyzes the hydrolysis of ATP coupled with the electrogenic transport of potassium into the cytoplasm. This subunit is responsible for energy coupling to the transport system and for the release of the potassium ions to the cytoplasm. The protein is Potassium-transporting ATPase ATP-binding subunit 2 of Listeria innocua serovar 6a (strain ATCC BAA-680 / CLIP 11262).